Reading from the N-terminus, the 373-residue chain is Cytoplasmic tRNA 2-thiolation protein 1 (373 aa).

This sequence belongs to the TtcA family. CTU1/NCS6/ATPBD3 subfamily.

The protein resides in the cytoplasm. Its pathway is tRNA modification; 5-methoxycarbonylmethyl-2-thiouridine-tRNA biosynthesis. Plays a central role in 2-thiolation of mcm(5)S(2)U at tRNA wobble positions of tRNA(Lys), tRNA(Glu) and tRNA(Gln). Directly binds tRNAs and probably acts by catalyzing adenylation of tRNAs, an intermediate required for 2-thiolation. It is unclear whether it acts as a sulfurtransferase that transfers sulfur from thiocarboxylated URM1 onto the uridine of tRNAs at wobble position. Prior mcm(5) tRNA modification by the elongator complex is required for 2-thiolation. May also be involved in protein urmylation. This is Cytoplasmic tRNA 2-thiolation protein 1 from Malassezia globosa (strain ATCC MYA-4612 / CBS 7966) (Dandruff-associated fungus).